The primary structure comprises 188 residues: MSIKSDKWIRRMSEEFGMIDPFEPNQIKEADGKRIISYGTSSYGYDIRCANEFKIFTNINSTIVDPKNFDPKNFVTVEDDCCIIPPNSFALARTVEYFRIPRNVLTVCLGKSTYARCGIIVNVTPFEPEWEGYVTLEFSNTTPLPAKIYAGEGVAQVLFFESDEICKTSYKDRNGKYMGQTGVTLPKA.

DCTP contacts are provided by residues 111–116 (KSTYAR), 135–137 (TLE), Gln-156, Tyr-170, and Gln-180. Glu-137 functions as the Proton donor/acceptor in the catalytic mechanism.

Belongs to the dCTP deaminase family. Homotrimer.

The enzyme catalyses dCTP + H2O + H(+) = dUTP + NH4(+). Its pathway is pyrimidine metabolism; dUMP biosynthesis; dUMP from dCTP (dUTP route): step 1/2. Functionally, catalyzes the deamination of dCTP to dUTP. The sequence is that of dCTP deaminase from Neisseria meningitidis serogroup C / serotype 2a (strain ATCC 700532 / DSM 15464 / FAM18).